A 96-amino-acid chain; its full sequence is Large ribosomal subunit protein uL23 (96 aa).

It belongs to the universal ribosomal protein uL23 family. In terms of assembly, part of the 50S ribosomal subunit. Contacts protein L29, and trigger factor when it is bound to the ribosome.

Its function is as follows. One of the early assembly proteins it binds 23S rRNA. One of the proteins that surrounds the polypeptide exit tunnel on the outside of the ribosome. Forms the main docking site for trigger factor binding to the ribosome. In Bacillus mycoides (strain KBAB4) (Bacillus weihenstephanensis), this protein is Large ribosomal subunit protein uL23.